A 426-amino-acid polypeptide reads, in one-letter code: Dihydroorotase (426 aa).

The Zn(2+) site is built by His-58 and His-60. Substrate contacts are provided by residues 60–62 (HLR) and Asn-92. Residues Asp-150, His-177, and His-230 each contribute to the Zn(2+) site. Position 276 (Asn-276) interacts with substrate. Residue Asp-303 coordinates Zn(2+). The active site involves Asp-303. Substrate is bound by residues His-307 and 321–322 (FG).

This sequence belongs to the metallo-dependent hydrolases superfamily. DHOase family. Class I DHOase subfamily. Zn(2+) is required as a cofactor.

The catalysed reaction is (S)-dihydroorotate + H2O = N-carbamoyl-L-aspartate + H(+). It participates in pyrimidine metabolism; UMP biosynthesis via de novo pathway; (S)-dihydroorotate from bicarbonate: step 3/3. Functionally, catalyzes the reversible cyclization of carbamoyl aspartate to dihydroorotate. This Listeria welshimeri serovar 6b (strain ATCC 35897 / DSM 20650 / CCUG 15529 / CIP 8149 / NCTC 11857 / SLCC 5334 / V8) protein is Dihydroorotase.